Here is a 169-residue protein sequence, read N- to C-terminus: MTALNVLIYPDDHLKVVCEPVTEVNDAIRKIVDDMFDTMYQEKGIGLAAPQVDILQRIITIDVEGDKQNQFVLINPEILASEGETGIEEGCLSIPGFRALVPRKEKVTVRALDRDGKEFTLDADGLLAICIQHEIDHLNGILFVDYLSPLKRQRIKEKLIKYKKQIAKS.

C91 and H133 together coordinate Fe cation. E134 is a catalytic residue. H137 lines the Fe cation pocket.

This sequence belongs to the polypeptide deformylase family. Fe(2+) serves as cofactor.

It catalyses the reaction N-terminal N-formyl-L-methionyl-[peptide] + H2O = N-terminal L-methionyl-[peptide] + formate. In terms of biological role, removes the formyl group from the N-terminal Met of newly synthesized proteins. Requires at least a dipeptide for an efficient rate of reaction. N-terminal L-methionine is a prerequisite for activity but the enzyme has broad specificity at other positions. This is Peptide deformylase from Haemophilus influenzae (strain 86-028NP).